The following is a 150-amino-acid chain: Aspartate 1-decarboxylase 1 (150 aa).

S24 functions as the Schiff-base intermediate with substrate; via pyruvic acid in the catalytic mechanism. S24 is modified (pyruvic acid (Ser)). Residue T56 coordinates substrate. Y57 acts as the Proton donor in catalysis. 72 to 74 is a substrate binding site; it reads GAA.

It belongs to the PanD family. In terms of assembly, heterooctamer of four alpha and four beta subunits. The cofactor is pyruvate. Post-translationally, is synthesized initially as an inactive proenzyme, which is activated by self-cleavage at a specific serine bond to produce a beta-subunit with a hydroxyl group at its C-terminus and an alpha-subunit with a pyruvoyl group at its N-terminus.

It localises to the cytoplasm. It catalyses the reaction L-aspartate + H(+) = beta-alanine + CO2. It participates in cofactor biosynthesis; (R)-pantothenate biosynthesis; beta-alanine from L-aspartate: step 1/1. Functionally, catalyzes the pyruvoyl-dependent decarboxylation of aspartate to produce beta-alanine. The sequence is that of Aspartate 1-decarboxylase 1 from Mesorhizobium japonicum (strain LMG 29417 / CECT 9101 / MAFF 303099) (Mesorhizobium loti (strain MAFF 303099)).